Here is a 445-residue protein sequence, read N- to C-terminus: Plasmid recombination enzyme (445 aa).

Residues tyrosine 45 and tyrosine 113 each coordinate DNA.

The protein belongs to the plasmid mobilization pre family.

The chain is Plasmid recombination enzyme from Bacillus thuringiensis.